Reading from the N-terminus, the 314-residue chain is DNA oxidative demethylase ALKBH2 (314 aa).

Polar residues predominate over residues 1-28; that stretch reads MTNPLNSTAANRSNQPSSDGISDGQITN. The tract at residues 1 to 75 is disordered; the sequence is MTNPLNSTAA…KRFHYHQDQR (75 aa). The span at 57–75 shows a compositional bias: basic and acidic residues; the sequence is NGKDDSDTKKRFHYHQDQR. Substrate-binding positions include tryptophan 132 and 160–163; that span reads ALVY. Residues 194 to 314 enclose the Fe2OG dioxygenase domain; the sequence is RFNSLLLNRY…RINLTFRLVL (121 aa). 201-203 lines the 2-oxoglutarate pocket; the sequence is NRY. Residues histidine 213 and aspartate 215 each contribute to the Fe cation site. Aspartate 216 is a binding site for substrate. Residues 242 to 271 form a disordered region; that stretch reads KKDEESSQGKTGDSGPAKKRLKRSSREDQQ. Residue histidine 293 coordinates Fe cation. 2-oxoglutarate contacts are provided by residues arginine 305 and 305–311; that span reads RINLTFR.

The protein belongs to the alkB family. Requires Fe(2+) as cofactor. Expressed ubiquitously, including in seedlings, leaves and flowers.

The protein localises to the nucleus. It catalyses the reaction a methylated nucleobase within DNA + 2-oxoglutarate + O2 = a nucleobase within DNA + formaldehyde + succinate + CO2. Dioxygenase that repairs alkylated DNA containing 1-methyladenine and 1-ethenoadenine by oxidative demethylation. Accepts double-stranded and single-stranded substrates, with a preference for dsDNA over ssDNA. Confers resistance to methylating agents such as methylmethanesulphonate (MMS). The polypeptide is DNA oxidative demethylase ALKBH2 (ALKBH2) (Arabidopsis thaliana (Mouse-ear cress)).